The sequence spans 314 residues: Serine protease 46 (314 aa).

Residues 44-281 form the Peptidase S1 domain; sequence VVNGKVVEVG…FTQWIKRQIG (238 aa). Cysteines 69 and 85 form a disulfide. Active-site charge relay system residues include histidine 84 and aspartate 130. 3 disulfides stabilise this stretch: cysteine 164–cysteine 239, cysteine 197–cysteine 219, and cysteine 229–cysteine 257. Catalysis depends on serine 233, which acts as the Charge relay system. The helical transmembrane segment at 293–313 threads the bilayer; sequence FLSPFILTGYILLVSLGSLWL.

It belongs to the peptidase S1 family.

The protein localises to the membrane. This chain is Serine protease 46 (Prss46), found in Rattus norvegicus (Rat).